A 465-amino-acid chain; its full sequence is Serine/threonine-protein kinase 38 (465 aa).

Ala-2 carries the post-translational modification N-acetylalanine. Positions Lys-62 to Glu-87 are interaction with S100B. Thr-74 bears the Phosphothreonine mark. The 294-residue stretch at Phe-89–Phe-382 folds into the Protein kinase domain. Residues Ile-95–Val-103 and Lys-118 each bind ATP. The active-site Proton acceptor is Asp-212. At Ser-264 the chain carries Phosphoserine. A Phosphoserine; by autocatalysis modification is found at Ser-281. The UFM1-interacting motif (UFIM) motif lies at Trp-306 to Ile-311. In terms of domain architecture, AGC-kinase C-terminal spans Glu-383–Gly-455. Phosphothreonine; by STK24/MST3 is present on Thr-444.

It belongs to the protein kinase superfamily. AGC Ser/Thr protein kinase family. As to quaternary structure, homodimeric S100B binds two molecules of STK38. Interacts with MOB1 and MOB2. Interacts with MAP3K1 and MAP3K2 (via the kinase catalytic domain). Forms a tripartite complex with MOBKL1B and STK3/MST2. Interacts with MICAL1; leading to inhibit the protein kinase activity by antagonizing activation by MST1/STK4. Mg(2+) is required as a cofactor. Post-translationally, ISGylated. Phosphorylated by STK3/MST2 and this is enhanced by MOBKL1B. In terms of tissue distribution, ubiquitously expressed with highest levels observed in peripheral blood leukocytes.

The protein localises to the nucleus. It localises to the cytoplasm. The protein resides in the chromosome. It catalyses the reaction L-seryl-[protein] + ATP = O-phospho-L-seryl-[protein] + ADP + H(+). The enzyme catalyses L-threonyl-[protein] + ATP = O-phospho-L-threonyl-[protein] + ADP + H(+). With respect to regulation, activated by binding of S100B which releases autoinhibitory N-lobe interactions, enabling ATP to bind and the autophosphorylation of Ser-281. Thr-444 then undergoes calcium-dependent phosphorylation by STK24/MST3. Interactions between phosphorylated Thr-444 and the N-lobe promote additional structural changes that complete the activation of the kinase. Autoinhibition is also released by the binding of MOB1/MOBKL1A and MOB2/HCCA2 to the N-terminal of STK38. Serine/threonine-protein kinase that acts as a negative regulator of MAP3K1/2 signaling. Converts MAP3K2 from its phosphorylated form to its non-phosphorylated form and inhibits autophosphorylation of MAP3K2. Acts as an ufmylation 'reader' in a kinase-independent manner: specifically recognizes and binds mono-ufmylated histone H4 in response to DNA damage, promoting the recruitment of SUV39H1 to the double-strand breaks, resulting in ATM activation. This chain is Serine/threonine-protein kinase 38, found in Homo sapiens (Human).